A 235-amino-acid chain; its full sequence is Superoxide dismutase [Mn] 3.1, mitochondrial (235 aa).

A mitochondrion-targeting transit peptide spans 1–31; sequence MALRTLASKKVLSFPFGGAGRPLAAAASARG. Residues H59, H107, D196, and H200 each coordinate Mn(2+).

This sequence belongs to the iron/manganese superoxide dismutase family. Homotetramer. Mn(2+) is required as a cofactor.

The protein localises to the mitochondrion matrix. The enzyme catalyses 2 superoxide + 2 H(+) = H2O2 + O2. Destroys superoxide anion radicals which are normally produced within the cells and which are toxic to biological systems. This is Superoxide dismutase [Mn] 3.1, mitochondrial (SODA.4) from Zea mays (Maize).